Reading from the N-terminus, the 356-residue chain is Poly(rC)-binding protein 1 (356 aa).

Residue methionine 1 is modified to N-acetylmethionine. 2 KH domains span residues 13 to 75 and 97 to 162; these read TLTI…FAMI and PVTL…VKQI. Lysine 115 is covalently cross-linked (Glycyl lysine isopeptide (Lys-Gly) (interchain with G-Cter in SUMO2)). Phosphoserine occurs at positions 173, 189, 190, 246, 264, and 273. Residues 279–343 enclose the KH 3 domain; that stretch reads QTTHELTIPN…ASISLAQYLI (65 aa).

Phosphorylated; lowers poly(rC)-binding activity.

It is found in the nucleus. The protein resides in the cytoplasm. Its function is as follows. Single-stranded nucleic acid binding protein that binds preferentially to oligo dC. Together with PCBP2, required for erythropoiesis, possibly by regulating mRNA splicing. The polypeptide is Poly(rC)-binding protein 1 (PCBP1) (Bos taurus (Bovine)).